Reading from the N-terminus, the 353-residue chain is Quinolinate synthase (353 aa).

Iminosuccinate-binding residues include histidine 47 and serine 68. [4Fe-4S] cluster is bound at residue cysteine 113. Iminosuccinate-binding positions include tyrosine 139–asparagine 141 and serine 156. Cysteine 200 contributes to the [4Fe-4S] cluster binding site. Iminosuccinate contacts are provided by residues histidine 226–glutamate 228 and threonine 243. Residue cysteine 297 coordinates [4Fe-4S] cluster.

Belongs to the quinolinate synthase family. Type 1 subfamily. The cofactor is [4Fe-4S] cluster.

It localises to the cytoplasm. The catalysed reaction is iminosuccinate + dihydroxyacetone phosphate = quinolinate + phosphate + 2 H2O + H(+). It functions in the pathway cofactor biosynthesis; NAD(+) biosynthesis; quinolinate from iminoaspartate: step 1/1. Catalyzes the condensation of iminoaspartate with dihydroxyacetone phosphate to form quinolinate. This is Quinolinate synthase from Vibrio vulnificus (strain CMCP6).